The sequence spans 358 residues: Trans-enoyl reductase milB (358 aa).

Residues Val48–Lys51, Ala170–Thr173, Ser193–His196, Tyr211, Leu258–Asp259, and Val349–Arg350 each bind NADP(+).

Belongs to the zinc-containing alcohol dehydrogenase family. In terms of assembly, monomer.

The catalysed reaction is 10 malonyl-CoA + acetyl-CoA + 3 AH2 + 8 NADPH + 18 H(+) = cordypyrone A + 3 A + 10 CO2 + 8 NADP(+) + 11 CoA + 8 H2O. It participates in secondary metabolite biosynthesis. Trans-enoyl reductase; part of the gene cluster that mediates the biosynthesis of cordypyrones A and B, 2 pyrones that show modest activities against pathogenic bacteria including methicillin-resistant Staphylococcus aureus (MRSA), Mycobacterium tuberculosis and Bacillus cereus. The HR-PKS milA catalyzes the formation of cordypyrones A via condensation of one acetate with 10 malonate units. Since milA lacks an enoyl reductase domain, the 2 beta-keto processing domains DH and KR of milA collaborate with the trans-enoyl reductase milB to catalyze the different levels of reduction. The cytochrome P450 monooxygenase milC then hydroxylates the C-22 of cordypyrones A to yield cordypyrones B. The sequence is that of Trans-enoyl reductase milB from Cordyceps militaris (strain CM01) (Caterpillar fungus).